A 378-amino-acid polypeptide reads, in one-letter code: D-alanine--D-alanine ligase (378 aa).

The ATP-grasp domain occupies 140–346 (KKIISQAGIR…YSDLIDRLIQ (207 aa)). 170-225 (EEKLGNLTFVKPAKQGSSVGIHRVTNAEEYEKALDDAFKYDYKILVEQGIANPQEI) serves as a coordination point for ATP. Positions 300, 313, and 315 each coordinate Mg(2+).

The protein belongs to the D-alanine--D-alanine ligase family. The cofactor is Mg(2+). It depends on Mn(2+) as a cofactor.

Its subcellular location is the cytoplasm. It carries out the reaction 2 D-alanine + ATP = D-alanyl-D-alanine + ADP + phosphate + H(+). It participates in cell wall biogenesis; peptidoglycan biosynthesis. In terms of biological role, cell wall formation. This Limosilactobacillus reuteri (strain DSM 20016) (Lactobacillus reuteri) protein is D-alanine--D-alanine ligase.